The sequence spans 417 residues: MADIKNYTLNFGPQHPAAHGVLRLVLELDGEVIQRADPHIGLLHRATEKLAEQKTWIQSVPYMDRLDYVSMMVNEHAYVMAIERLLGLEVPVRAQYIRVMFDEITRLLNHLMWIGSHALDVGAMAVFLYAFREREDMFDMYEAVSGARMHAAYYRPGGVYRDLPDTMPQYRASKVHNERAIKAMNEARSGSLLDFIEDFTNRFPKYVDEYETLLTDNRIWKQRLVDIGVVSPERALQMGFTGPMLRGSGIEWDLRKKQPYEVYDKLDFDVPVGVGGDCYARYLVRVEEMRQSNRIIRQCVEWLRRNPGPVITDNHKVAPPSRVDMKSNMEELIHHFKLFTEGMHVPEGEAYAAVEHPKGEFGIYAISDGANKPYRLKIRAPGFPHLAALDEMAKGHMIADAVTIIGTQDIVFGEIDR.

The protein belongs to the complex I 49 kDa subunit family. As to quaternary structure, NDH-1 is composed of 14 different subunits. Subunits NuoB, C, D, E, F, and G constitute the peripheral sector of the complex.

The protein localises to the cell inner membrane. It catalyses the reaction a quinone + NADH + 5 H(+)(in) = a quinol + NAD(+) + 4 H(+)(out). Functionally, NDH-1 shuttles electrons from NADH, via FMN and iron-sulfur (Fe-S) centers, to quinones in the respiratory chain. The immediate electron acceptor for the enzyme in this species is believed to be ubiquinone. Couples the redox reaction to proton translocation (for every two electrons transferred, four hydrogen ions are translocated across the cytoplasmic membrane), and thus conserves the redox energy in a proton gradient. The sequence is that of NADH-quinone oxidoreductase subunit D from Cupriavidus necator (strain ATCC 17699 / DSM 428 / KCTC 22496 / NCIMB 10442 / H16 / Stanier 337) (Ralstonia eutropha).